Reading from the N-terminus, the 84-residue chain is Three-finger toxin MALT0070C (84 aa).

Residues 1–21 form the signal peptide; it reads MKTLLLTLVVVTIVCLDLGYT. Intrachain disulfides connect Cys-24–Cys-43, Cys-36–Cys-60, Cys-64–Cys-71, and Cys-72–Cys-77.

The protein belongs to the three-finger toxin family. Short-chain subfamily. As to expression, expressed by the venom gland.

The protein resides in the secreted. This is Three-finger toxin MALT0070C from Micrurus altirostris (Uruguayan coral snake).